Reading from the N-terminus, the 724-residue chain is Probable methyltransferase PMT28 (724 aa).

Topologically, residues 1–22 (MMERKREMGIAYFARRIKQPRG) are cytoplasmic. The chain crosses the membrane as a helical; Signal-anchor for type II membrane protein span at residues 23 to 43 (IWVKMTFIVVLGLCFVFFWSF). The Lumenal portion of the chain corresponds to 44-724 (LSSSASTFNV…LCAQKTLWRP (681 aa)). The tract at residues 63-211 (EPVSSRTKSA…ISKKRKRKGP (149 aa)) is disordered. Over residues 71-98 (SAHEVSESSKLHERGKVESGSKSKEGKK) the composition is skewed to basic and acidic residues. Residues 107-125 (HETKKKKEHAVSHPHKKKD) show a composition bias toward basic residues. The segment covering 126–140 (VPKPVVEEVVVKEDQ) has biased composition (basic and acidic residues). Residues 141 to 173 (EHEEAESDDSDQSNKEDGEEGTESDGNEGESDG) are compositionally biased toward acidic residues. 3 N-linked (GlcNAc...) asparagine glycosylation sites follow: asparagine 305, asparagine 316, and asparagine 568.

The protein belongs to the methyltransferase superfamily.

Its subcellular location is the golgi apparatus membrane. The protein is Probable methyltransferase PMT28 of Arabidopsis thaliana (Mouse-ear cress).